Here is a 102-residue protein sequence, read N- to C-terminus: Small ribosomal subunit protein uS10 (102 aa).

This sequence belongs to the universal ribosomal protein uS10 family. In terms of assembly, part of the 30S ribosomal subunit.

Its function is as follows. Involved in the binding of tRNA to the ribosomes. The protein is Small ribosomal subunit protein uS10 of Carboxydothermus hydrogenoformans (strain ATCC BAA-161 / DSM 6008 / Z-2901).